A 370-amino-acid polypeptide reads, in one-letter code: S-adenosylmethionine:tRNA ribosyltransferase-isomerase (370 aa).

This sequence belongs to the QueA family. As to quaternary structure, monomer.

It is found in the cytoplasm. The catalysed reaction is 7-aminomethyl-7-carbaguanosine(34) in tRNA + S-adenosyl-L-methionine = epoxyqueuosine(34) in tRNA + adenine + L-methionine + 2 H(+). The protein operates within tRNA modification; tRNA-queuosine biosynthesis. Functionally, transfers and isomerizes the ribose moiety from AdoMet to the 7-aminomethyl group of 7-deazaguanine (preQ1-tRNA) to give epoxyqueuosine (oQ-tRNA). This Synechococcus sp. (strain WH7803) protein is S-adenosylmethionine:tRNA ribosyltransferase-isomerase.